Consider the following 255-residue polypeptide: Shieldin complex subunit 3 (255 aa).

A sufficient for interaction with MAD2L2 region spans residues glutamine 33–serine 88. The segment at glutamine 116–arginine 135 is disordered.

In terms of assembly, component of the shieldin complex, consisting of SHLD1, SHLD2, SHLD3 and MAD2L2/REV7. Within the complex, SHLD2 forms a scaffold which interacts with a SHLD3-MAD2L2 subcomplex via its N-terminus, and with SHLD1 via its C-terminus. Interacts with ASTE1.

Its subcellular location is the chromosome. In terms of biological role, component of the shieldin complex, which plays an important role in repair of DNA double-stranded breaks (DSBs). During G1 and S phase of the cell cycle, the complex functions downstream of TP53BP1 to promote non-homologous end joining (NHEJ) and suppress DNA end resection. Mediates various NHEJ-dependent processes including immunoglobulin class-switch recombination, and fusion of unprotected telomeres. This chain is Shieldin complex subunit 3, found in Mus musculus (Mouse).